The following is a 54-amino-acid chain: Conotoxin vc5a (54 aa).

The N-terminal stretch at 1–14 is a signal peptide; it reads VILLLITSTPSVDA. Residues 15–42 constitute a propeptide that is removed on maturation; the sequence is RLKAKDNMPLASFHDNAKRTLQTRLINT. Proline 49 carries the post-translational modification 4-hydroxyproline. Isoleucine 53 bears the Isoleucine amide mark.

This sequence belongs to the conotoxin T superfamily. Contains 2 disulfide bonds that can be either 'C1-C3, C2-C4' or 'C1-C4, C2-C3', since these disulfide connectivities have been observed for conotoxins with cysteine framework V (for examples, see AC P0DQQ7 and AC P81755). As to expression, expressed by the venom duct.

It localises to the secreted. The polypeptide is Conotoxin vc5a (Conus victoriae (Queen Victoria cone)).